The chain runs to 178 residues: Probable chorismate pyruvate-lyase (178 aa).

Residues M37, R78, L114, and E165 each contribute to the substrate site.

It belongs to the UbiC family.

The protein localises to the cytoplasm. The enzyme catalyses chorismate = 4-hydroxybenzoate + pyruvate. Its pathway is cofactor biosynthesis; ubiquinone biosynthesis. Its function is as follows. Removes the pyruvyl group from chorismate, with concomitant aromatization of the ring, to provide 4-hydroxybenzoate (4HB) for the ubiquinone pathway. In Aeromonas hydrophila subsp. hydrophila (strain ATCC 7966 / DSM 30187 / BCRC 13018 / CCUG 14551 / JCM 1027 / KCTC 2358 / NCIMB 9240 / NCTC 8049), this protein is Probable chorismate pyruvate-lyase.